The following is a 254-amino-acid chain: Alcohol dehydrogenase (254 aa).

10-33 (FVAGLGGIGLDTSREIVKSGPKNL) provides a ligand contact to NAD(+). Ser138 contacts substrate. Tyr151 (proton acceptor) is an active-site residue.

It belongs to the short-chain dehydrogenases/reductases (SDR) family. In terms of assembly, homodimer.

The enzyme catalyses a primary alcohol + NAD(+) = an aldehyde + NADH + H(+). The catalysed reaction is a secondary alcohol + NAD(+) = a ketone + NADH + H(+). This chain is Alcohol dehydrogenase (Adh), found in Drosophila nigra (Fruit fly).